The chain runs to 431 residues: Serine--tRNA ligase (431 aa).

237–239 (TAE) contacts L-serine. 268–270 (RSE) serves as a coordination point for ATP. Glu291 is a binding site for L-serine. 355–358 (EISS) is an ATP binding site. Residue Ser390 participates in L-serine binding.

It belongs to the class-II aminoacyl-tRNA synthetase family. Type-1 seryl-tRNA synthetase subfamily. In terms of assembly, homodimer. The tRNA molecule binds across the dimer.

Its subcellular location is the cytoplasm. It carries out the reaction tRNA(Ser) + L-serine + ATP = L-seryl-tRNA(Ser) + AMP + diphosphate + H(+). It catalyses the reaction tRNA(Sec) + L-serine + ATP = L-seryl-tRNA(Sec) + AMP + diphosphate + H(+). Its pathway is aminoacyl-tRNA biosynthesis; selenocysteinyl-tRNA(Sec) biosynthesis; L-seryl-tRNA(Sec) from L-serine and tRNA(Sec): step 1/1. Its function is as follows. Catalyzes the attachment of serine to tRNA(Ser). Is also able to aminoacylate tRNA(Sec) with serine, to form the misacylated tRNA L-seryl-tRNA(Sec), which will be further converted into selenocysteinyl-tRNA(Sec). The chain is Serine--tRNA ligase from Neisseria meningitidis serogroup B (strain ATCC BAA-335 / MC58).